The chain runs to 405 residues: S-adenosylmethionine synthase (405 aa).

An ATP-binding site is contributed by 141–146 (GQGSVD).

Belongs to the AdoMet synthase 2 family. The cofactor is Mg(2+).

The catalysed reaction is L-methionine + ATP + H2O = S-adenosyl-L-methionine + phosphate + diphosphate. It participates in amino-acid biosynthesis; S-adenosyl-L-methionine biosynthesis; S-adenosyl-L-methionine from L-methionine: step 1/1. Its function is as follows. Catalyzes the formation of S-adenosylmethionine from methionine and ATP. The polypeptide is S-adenosylmethionine synthase (Methanococcus maripaludis (Methanococcus deltae)).